The sequence spans 299 residues: Probable lipid kinase YegS (299 aa).

In terms of domain architecture, DAGKc spans 2-133 (ADLPASLLIL…IDIAQVNKET (132 aa)). ATP-binding positions include threonine 40, 66–72 (GDGTINE), and threonine 95. Mg(2+) contacts are provided by leucine 215, aspartate 218, and leucine 220. Glutamate 271 functions as the Proton acceptor in the catalytic mechanism.

Belongs to the diacylglycerol/lipid kinase family. YegS lipid kinase subfamily. Mg(2+) serves as cofactor. It depends on Ca(2+) as a cofactor.

It localises to the cytoplasm. Functionally, probably phosphorylates lipids; the in vivo substrate is unknown. This is Probable lipid kinase YegS from Escherichia fergusonii (strain ATCC 35469 / DSM 13698 / CCUG 18766 / IAM 14443 / JCM 21226 / LMG 7866 / NBRC 102419 / NCTC 12128 / CDC 0568-73).